The following is a 340-amino-acid chain: Ribonucleoside-diphosphate reductase small subunit (340 aa).

The helical transmembrane segment at 180 to 200 (FILMILIEGIFFAASFAAIAY) threads the bilayer.

This sequence belongs to the ribonucleoside diphosphate reductase small chain family. In terms of assembly, heterotetramer composed of a homodimer of the large subunit (R1) and a homodimer of the small subunit (R2). Larger multisubunit protein complex are also active, composed of (R1)n(R2)n. Fe cation serves as cofactor.

The protein localises to the host membrane. It catalyses the reaction a 2'-deoxyribonucleoside 5'-diphosphate + [thioredoxin]-disulfide + H2O = a ribonucleoside 5'-diphosphate + [thioredoxin]-dithiol. Its function is as follows. Ribonucleoside-diphosphate reductase holoenzyme provides the precursors necessary for viral DNA synthesis. Allows virus growth in non-dividing cells, as well as reactivation from latency in infected hosts. Catalyzes the biosynthesis of deoxyribonucleotides from the corresponding ribonucleotides. The protein is Ribonucleoside-diphosphate reductase small subunit of Human herpesvirus 1 (strain 17) (HHV-1).